We begin with the raw amino-acid sequence, 126 residues long: Glycine cleavage system H protein (126 aa).

Residues 21 to 103 (TVTIGISEHA…YEGGWIVKVK (83 aa)) form the Lipoyl-binding domain. Lys62 carries the N6-lipoyllysine modification.

The protein belongs to the GcvH family. The glycine cleavage system is composed of four proteins: P, T, L and H. (R)-lipoate serves as cofactor.

Functionally, the glycine cleavage system catalyzes the degradation of glycine. The H protein shuttles the methylamine group of glycine from the P protein to the T protein. The sequence is that of Glycine cleavage system H protein from Vibrio parahaemolyticus serotype O3:K6 (strain RIMD 2210633).